The chain runs to 195 residues: Peptidyl-tRNA hydrolase (195 aa).

Residue Tyr-17 participates in tRNA binding. The Proton acceptor role is filled by His-22. Residues Tyr-68, Asn-70, and Asn-116 each coordinate tRNA.

It belongs to the PTH family. Monomer.

It localises to the cytoplasm. It catalyses the reaction an N-acyl-L-alpha-aminoacyl-tRNA + H2O = an N-acyl-L-amino acid + a tRNA + H(+). In terms of biological role, hydrolyzes ribosome-free peptidyl-tRNAs (with 1 or more amino acids incorporated), which drop off the ribosome during protein synthesis, or as a result of ribosome stalling. Catalyzes the release of premature peptidyl moieties from peptidyl-tRNA molecules trapped in stalled 50S ribosomal subunits, and thus maintains levels of free tRNAs and 50S ribosomes. The chain is Peptidyl-tRNA hydrolase from Shewanella baltica (strain OS155 / ATCC BAA-1091).